Here is a 383-residue protein sequence, read N- to C-terminus: Guanine nucleotide-binding protein alpha-1 subunit (383 aa).

Positions 1 to 20 (MGLLCSRSRHHTEDTDENTQ) are disordered. The N-myristoyl glycine moiety is linked to residue Gly2. Cys5 carries the S-palmitoyl cysteine lipid modification. A G-alpha domain is found at 37-383 (HIRKLLLLGA…RRNLLEAGLL (347 aa)). The segment at 40 to 53 (KLLLLGAGESGKST) is G1 motif. GTP-binding residues include Glu48, Ser49, Gly50, Lys51, Ser52, Thr53, Asp162, Leu187, Tyr188, Thr193, Gly221, Asn287, Lys288, Asp290, and Ala355. Position 52 (Ser52) interacts with Mg(2+). Residues 185–193 (DVLYARVRT) form a G2 motif region. Residue Thr193 participates in Mg(2+) binding. The segment at 214–223 (YRLFDVGGQR) is G3 motif. The segment at 283-290 (MLFLNKFD) is G4 motif. Residues 353–358 (TTALDQ) form a G5 motif region.

Belongs to the G-alpha family. As to quaternary structure, g proteins are composed of 3 units; alpha, beta and gamma. The alpha chain contains the guanine nucleotide binding site. Interacts with RGS1, THF1, the pirin protein PRN1, GTG1 and GTG2. Binds to GCR1. May interact with ADT3. No interactions with RACK1A, RACK1B or RACK1C. Interacts with PLDALPHA1. Interacts with CAND2/PMTR1. The cofactor is Mg(2+). In terms of tissue distribution, more abundant in roots and/or leaves.

The protein localises to the cell membrane. In terms of biological role, exhibits a fast rate of basal nucleotide exchange. Guanine nucleotide-binding proteins (G proteins) are involved as modulators or transducers in various transmembrane signaling systems. Together with GCR1, may regulate the cell cycle via a signaling cascade that uses phosphatidylinositol-specific phospholipase C (PI-PLC) as an effector and inositol 1,4,5-trisphosphate (IP(3)) as a second messenger. Promotes abscisic acid (ABA) responses in guard cells. Involved in the blue light (BL) signaling. Together with GCR1 and ADT3, required for BL-mediated synthesis of phenylpyruvate and subsequently of phenylalanine (Phe), in etiolated seedlings. Modulates root architecture (e.g. lateral root formation). Negatively regulated by RGS1. In collaboration with CAND2/PMTR1, regulates the melatonin-mediated stomatal closure involving H(2)O(2) and Ca(2+) signals. The polypeptide is Guanine nucleotide-binding protein alpha-1 subunit (Arabidopsis thaliana (Mouse-ear cress)).